Reading from the N-terminus, the 460-residue chain is Bifunctional protein GlmU (460 aa).

Positions 1-229 are pyrophosphorylase; sequence MTNYAIILAA…FNESLGVNDR (229 aa). UDP-N-acetyl-alpha-D-glucosamine is bound by residues 8–11, K22, Q72, and 77–78; these read LAAG and GT. D102 is a Mg(2+) binding site. G139, E154, N169, and N227 together coordinate UDP-N-acetyl-alpha-D-glucosamine. N227 contributes to the Mg(2+) binding site. The linker stretch occupies residues 230–250; that stretch reads VALATAETVMRQRITQKHMVN. Positions 251–460 are N-acetyltransferase; the sequence is GVTFQNPETV…RLAHHPSRSK (210 aa). Residues R332 and K350 each contribute to the UDP-N-acetyl-alpha-D-glucosamine site. H362 (proton acceptor) is an active-site residue. 2 residues coordinate UDP-N-acetyl-alpha-D-glucosamine: Y365 and N376. Acetyl-CoA-binding positions include A379, 385–386, S404, A422, and R439; that span reads NY.

The protein in the N-terminal section; belongs to the N-acetylglucosamine-1-phosphate uridyltransferase family. In the C-terminal section; belongs to the transferase hexapeptide repeat family. In terms of assembly, homotrimer. Requires Mg(2+) as cofactor.

Its subcellular location is the cytoplasm. It carries out the reaction alpha-D-glucosamine 1-phosphate + acetyl-CoA = N-acetyl-alpha-D-glucosamine 1-phosphate + CoA + H(+). The catalysed reaction is N-acetyl-alpha-D-glucosamine 1-phosphate + UTP + H(+) = UDP-N-acetyl-alpha-D-glucosamine + diphosphate. It functions in the pathway nucleotide-sugar biosynthesis; UDP-N-acetyl-alpha-D-glucosamine biosynthesis; N-acetyl-alpha-D-glucosamine 1-phosphate from alpha-D-glucosamine 6-phosphate (route II): step 2/2. The protein operates within nucleotide-sugar biosynthesis; UDP-N-acetyl-alpha-D-glucosamine biosynthesis; UDP-N-acetyl-alpha-D-glucosamine from N-acetyl-alpha-D-glucosamine 1-phosphate: step 1/1. It participates in bacterial outer membrane biogenesis; LPS lipid A biosynthesis. Catalyzes the last two sequential reactions in the de novo biosynthetic pathway for UDP-N-acetylglucosamine (UDP-GlcNAc). The C-terminal domain catalyzes the transfer of acetyl group from acetyl coenzyme A to glucosamine-1-phosphate (GlcN-1-P) to produce N-acetylglucosamine-1-phosphate (GlcNAc-1-P), which is converted into UDP-GlcNAc by the transfer of uridine 5-monophosphate (from uridine 5-triphosphate), a reaction catalyzed by the N-terminal domain. This is Bifunctional protein GlmU from Streptococcus pyogenes serotype M18 (strain MGAS8232).